A 146-amino-acid polypeptide reads, in one-letter code: Anti-sigma F factor (146 aa).

The protein belongs to the anti-sigma-factor family.

It catalyses the reaction L-seryl-[protein] + ATP = O-phospho-L-seryl-[protein] + ADP + H(+). The catalysed reaction is L-threonyl-[protein] + ATP = O-phospho-L-threonyl-[protein] + ADP + H(+). Binds to sigma F and blocks its ability to form an RNA polymerase holoenzyme (E-sigma F). Phosphorylates SpoIIAA on a serine residue. This phosphorylation may enable SpoIIAA to act as an anti-anti-sigma factor that counteracts SpoIIAB and thus releases sigma F from inhibition. The protein is Anti-sigma F factor of Oceanobacillus iheyensis (strain DSM 14371 / CIP 107618 / JCM 11309 / KCTC 3954 / HTE831).